We begin with the raw amino-acid sequence, 231 residues long: 5'-methylthioadenosine/S-adenosylhomocysteine nucleosidase (231 aa).

The active-site Proton acceptor is the glutamate 12. Residues glycine 78, methionine 153, and 174–175 (ME) each bind substrate. Aspartate 198 (proton donor) is an active-site residue.

The protein belongs to the PNP/UDP phosphorylase family. MtnN subfamily.

It catalyses the reaction S-adenosyl-L-homocysteine + H2O = S-(5-deoxy-D-ribos-5-yl)-L-homocysteine + adenine. The catalysed reaction is S-methyl-5'-thioadenosine + H2O = 5-(methylsulfanyl)-D-ribose + adenine. It carries out the reaction 5'-deoxyadenosine + H2O = 5-deoxy-D-ribose + adenine. It functions in the pathway amino-acid biosynthesis; L-methionine biosynthesis via salvage pathway; S-methyl-5-thio-alpha-D-ribose 1-phosphate from S-methyl-5'-thioadenosine (hydrolase route): step 1/2. Its function is as follows. Catalyzes the irreversible cleavage of the glycosidic bond in both 5'-methylthioadenosine (MTA) and S-adenosylhomocysteine (SAH/AdoHcy) to adenine and the corresponding thioribose, 5'-methylthioribose and S-ribosylhomocysteine, respectively. Also cleaves 5'-deoxyadenosine, a toxic by-product of radical S-adenosylmethionine (SAM) enzymes, into 5-deoxyribose and adenine. This Bacillus cereus (strain G9842) protein is 5'-methylthioadenosine/S-adenosylhomocysteine nucleosidase.